The primary structure comprises 106 residues: Large ribosomal subunit protein eL42 (106 aa).

Residues Phe36–Pro56 are disordered.

The protein belongs to the eukaryotic ribosomal protein eL42 family.

The chain is Large ribosomal subunit protein eL42 (RPL44) from Coprinopsis cinerea (strain Okayama-7 / 130 / ATCC MYA-4618 / FGSC 9003) (Inky cap fungus).